We begin with the raw amino-acid sequence, 217 residues long: uncharacterized protein (217 aa).

Helical transmembrane passes span 151 to 171 and 177 to 197; these read LIPF…HSLF and ISFH…FILF.

It is found in the mitochondrion membrane. This is an uncharacterized protein from Schizosaccharomyces pombe (strain 972 / ATCC 24843) (Fission yeast).